The primary structure comprises 416 residues: Trifolitoxin-processing protein TfxD (416 aa).

Transmembrane regions (helical) follow at residues M24–V44, V48–M68, V79–A99, I114–A134, S153–T173, S176–A196, A230–A250, I255–G275, V295–I315, I322–L342, and V372–L392.

The protein localises to the cell membrane. Functionally, the actions of the proteins TfxB, TfxD and TfxF are implicated in the processing of the inactive trifolitoxin (TfxA) precursor into the active peptide. This is Trifolitoxin-processing protein TfxD (tfxD) from Rhizobium leguminosarum bv. trifolii.